The primary structure comprises 381 residues: GDSL esterase/lipase At3g48460 (381 aa).

A signal peptide spans 1–26; sequence MSSSISPLLTTAISVAILLFSTISTA. The Nucleophile role is filled by Ser-45. Residues Asn-112, Asn-140, and Asn-258 are each glycosylated (N-linked (GlcNAc...) asparagine). Catalysis depends on residues Asp-344 and His-347.

It belongs to the 'GDSL' lipolytic enzyme family.

Its subcellular location is the secreted. The sequence is that of GDSL esterase/lipase At3g48460 from Arabidopsis thaliana (Mouse-ear cress).